Here is a 26-residue protein sequence, read N- to C-terminus: Acyl carrier protein (26 aa).

One can recognise a Carrier domain in the interval Ser2–Glu26.

Belongs to the acyl carrier protein (ACP) family. Post-translationally, 4'-phosphopantetheine is transferred from CoA to a specific serine of apo-ACP by AcpS. This modification is essential for activity because fatty acids are bound in thioester linkage to the sulfhydryl of the prosthetic group.

The protein localises to the cytoplasm. Its pathway is lipid metabolism; fatty acid biosynthesis. Its function is as follows. Carrier of the growing fatty acid chain in fatty acid biosynthesis. In Erythrobacter longus, this protein is Acyl carrier protein (acpP).